A 182-amino-acid chain; its full sequence is Protein Syd (182 aa).

The protein belongs to the Syd family.

It is found in the cell inner membrane. In terms of biological role, interacts with the SecY protein in vivo. May bind preferentially to an uncomplexed state of SecY, thus functioning either as a chelating agent for excess SecY in the cell or as a regulatory factor that negatively controls the translocase function. This is Protein Syd from Pectobacterium carotovorum subsp. carotovorum (strain PC1).